Here is a 207-residue protein sequence, read N- to C-terminus: Large ribosomal subunit protein uL3 (207 aa).

Residues 126–149 (GPASHGSKKWHRRPGSIGQRKTPG) form a disordered region.

It belongs to the universal ribosomal protein uL3 family. In terms of assembly, part of the 50S ribosomal subunit. Forms a cluster with proteins L14 and L19.

Its function is as follows. One of the primary rRNA binding proteins, it binds directly near the 3'-end of the 23S rRNA, where it nucleates assembly of the 50S subunit. The protein is Large ribosomal subunit protein uL3 of Deinococcus geothermalis (strain DSM 11300 / CIP 105573 / AG-3a).